A 337-amino-acid chain; its full sequence is Heme A synthase (337 aa).

The next 5 membrane-spanning stretches (helical) occupy residues 6 to 26 (ITKW…IGGI), 87 to 107 (FIHR…LIYF), 119 to 139 (LPYI…WYMV), 154 to 174 (LAFH…QLIK), and 192 to 212 (LIFS…GALV). A heme-binding site is contributed by H256. Transmembrane regions (helical) follow at residues 258 to 278 (LVGY…LKIE), 285 to 305 (IAYF…ITLL), and 308 to 328 (VPII…SIII). H316 provides a ligand contact to heme.

This sequence belongs to the COX15/CtaA family. Type 2 subfamily. Interacts with CtaB. Requires heme b as cofactor.

The protein resides in the cell membrane. It catalyses the reaction Fe(II)-heme o + 2 A + H2O = Fe(II)-heme a + 2 AH2. It functions in the pathway porphyrin-containing compound metabolism; heme A biosynthesis; heme A from heme O: step 1/1. In terms of biological role, catalyzes the conversion of heme O to heme A by two successive hydroxylations of the methyl group at C8. The first hydroxylation forms heme I, the second hydroxylation results in an unstable dihydroxymethyl group, which spontaneously dehydrates, resulting in the formyl group of heme A. This chain is Heme A synthase, found in Rickettsia africae (strain ESF-5).